The sequence spans 1011 residues: DNA-directed RNA polymerase 2, chloroplastic/mitochondrial (1011 aa).

Positions 307–326 (KGDDNEESGGVENETSMKEQ) are disordered. Residues Asp-712, Lys-787, and Asp-944 contribute to the active site.

The protein belongs to the phage and mitochondrial RNA polymerase family. As to quaternary structure, interacts with NIP1 and NIP2.

It is found in the plastid. Its subcellular location is the chloroplast. The protein resides in the mitochondrion. The catalysed reaction is RNA(n) + a ribonucleoside 5'-triphosphate = RNA(n+1) + diphosphate. DNA-dependent RNA polymerase catalyzes the transcription of DNA into RNA using the four ribonucleoside triphosphates as substrates. The sequence is that of DNA-directed RNA polymerase 2, chloroplastic/mitochondrial (RPOT2) from Arabidopsis thaliana (Mouse-ear cress).